A 206-amino-acid polypeptide reads, in one-letter code: Large ribosomal subunit protein uL4 (206 aa).

A compositionally biased stretch (basic residues) spans 65–76; sequence KQKGTGRARHSS. Residues 65–94 are disordered; that stretch reads KQKGTGRARHSSARAPQFRGGGKAHGPVVR.

Belongs to the universal ribosomal protein uL4 family. In terms of assembly, part of the 50S ribosomal subunit.

In terms of biological role, one of the primary rRNA binding proteins, this protein initially binds near the 5'-end of the 23S rRNA. It is important during the early stages of 50S assembly. It makes multiple contacts with different domains of the 23S rRNA in the assembled 50S subunit and ribosome. Its function is as follows. Forms part of the polypeptide exit tunnel. This chain is Large ribosomal subunit protein uL4, found in Bartonella quintana (strain Toulouse) (Rochalimaea quintana).